The chain runs to 192 residues: 7-methyl-GTP pyrophosphatase (192 aa).

Asp69 (proton acceptor) is an active-site residue.

The protein belongs to the Maf family. YceF subfamily. A divalent metal cation serves as cofactor.

The protein resides in the cytoplasm. The enzyme catalyses N(7)-methyl-GTP + H2O = N(7)-methyl-GMP + diphosphate + H(+). In terms of biological role, nucleoside triphosphate pyrophosphatase that hydrolyzes 7-methyl-GTP (m(7)GTP). May have a dual role in cell division arrest and in preventing the incorporation of modified nucleotides into cellular nucleic acids. The polypeptide is 7-methyl-GTP pyrophosphatase (Pseudomonas savastanoi pv. phaseolicola (strain 1448A / Race 6) (Pseudomonas syringae pv. phaseolicola (strain 1448A / Race 6))).